Here is a 380-residue protein sequence, read N- to C-terminus: Probable inactive reductase easA (380 aa).

Residues 25–27 (PMT), A60, Q102, and H171 contribute to the FMN site. Substrate contacts are provided by H171 and N174. FMN is bound by residues K223, G299, 324–325 (GR), and R325. Y352 provides a ligand contact to substrate.

This sequence belongs to the NADH:flavin oxidoreductase/NADH oxidase family.

Probable inactive dehydrogenase; part of the gene cluster that mediates the biosynthesis of fungal ergot alkaloid ergovaline, the predominant ergopeptine product in E.festucae var. lolii. DmaW catalyzes the first step of ergot alkaloid biosynthesis by condensing dimethylallyl diphosphate (DMAP) and tryptophan to form 4-dimethylallyl-L-tryptophan. The second step is catalyzed by the methyltransferase easF that methylates 4-dimethylallyl-L-tryptophan in the presence of S-adenosyl-L-methionine, resulting in the formation of 4-dimethylallyl-L-abrine. The catalase easC and the FAD-dependent oxidoreductase easE then transform 4-dimethylallyl-L-abrine to chanoclavine-I which is further oxidized by easD in the presence of NAD(+), resulting in the formation of chanoclavine-I aldehyde. Agroclavine dehydrogenase easG then mediates the conversion of chanoclavine-I aldehyde to agroclavine via a non-enzymatic adduct reaction: the substrate is an iminium intermediate that is formed spontaneously from chanoclavine-I aldehyde in the presence of glutathione. The presence of easA is not required to complete this reaction. Further conversion of agroclavine to paspalic acid is a two-step process involving oxidation of agroclavine to elymoclavine and of elymoclavine to paspalic acid, the second step being performed by the elymoclavine oxidase cloA. Paspalic acid is then further converted to D-lysergic acid. Ergovaline is assembled from D-lysergic acid and three different amino acids by the D-lysergyl-peptide-synthetase composed of a monomudular (lpsB) and a trimodular (lpsA) nonribosomal peptide synthetase subunit. This is Probable inactive reductase easA from Epichloe festucae var. lolii (Neotyphodium lolii).